A 1033-amino-acid chain; its full sequence is uncharacterized protein (1033 aa).

This is an uncharacterized protein from Mycoplasma pneumoniae (strain ATCC 29342 / M129 / Subtype 1) (Mycoplasmoides pneumoniae).